Consider the following 801-residue polypeptide: Interleukin-4 receptor subunit alpha (801 aa).

The first 25 residues, 1 to 25 (MGWLCTKFLSSVSCLILLWVTGSGG), serve as a signal peptide directing secretion. Topologically, residues 26-232 (IKVLGDPTCF…NHFQLPLLQR (207 aa)) are extracellular. An intrachain disulfide couples Cys34 to Cys44. An N-linked (GlcNAc...) asparagine glycan is attached at Asn71. Cys74 and Cys86 are joined by a disulfide. Residues 125 to 223 (APDNLTLHTN…EWSPSITWYN (99 aa)) enclose the Fibronectin type-III domain. N-linked (GlcNAc...) asparagine glycans are attached at residues Asn128, Asn134, and Asn162. The residue at position 164 (Ser164) is a Phosphoserine. A glycan (N-linked (GlcNAc...) asparagine) is linked at Asn176. A WSXWS motif motif is present at residues 212 to 216 (WSEWS). A helical membrane pass occupies residues 233–256 (LPLGVSISCICILLFCLTCYFSII). At 257–801 (KIKKIWWDQI…PVGTLGVTVS (545 aa)) the chain is on the cytoplasmic side. Positions 262 to 270 (WWDQIPTPA) match the Box 1 motif motif. The segment at 424–476 (VGQSSMAESSSLLPSESGQASTSWACFPTGPSETTCQVTGQQPPHPDPERATG) is disordered. Low complexity predominate over residues 426–444 (QSSMAESSSLLPSESGQAS). The required for IRS1 activation and IL4-induced cell growth stretch occupies residues 439–549 (ESGQASTSWA…ESWEQILHMS (111 aa)). A compositionally biased stretch (polar residues) spans 454 to 465 (PSETTCQVTGQQ). Tyr492 bears the Phosphotyrosine mark. The interval 493 to 515 (RSFSDFSSPAPNPGELASEQKQA) is disordered. Residues 549–644 (SVLQHGTAGS…NSMPLFTFGL (96 aa)) form a required for IL4-induced gene expression region. Phosphotyrosine is present on residues Tyr566, Tyr594, and Tyr622. The ITIM motif motif lies at 698 to 703 (IVYSSL). The interval 767-801 (RTPSNLSGVGKGPGHSPVPSQTTEVPVGTLGVTVS) is disordered.

This sequence belongs to the type I cytokine receptor family. Type 4 subfamily. In terms of assembly, the functional IL4 receptor is formed by initial binding of IL4 to IL4R. Subsequent recruitment to the complex of the common gamma chain, in immune cells, creates a type I receptor and, in non-immune cells, of IL13RA1 forms a type II receptor. IL4R can also interact with the IL13/IL13RA1 complex to form a similar type II receptor. Interacts with PIK3C3. Interacts with the SH2-containing phosphatases, PTPN6/SHIP1, PTPN11/SHIP2 and INPP5D/SHIP. Interacts with JAK1 through a Box 1-containing region; inhibited by SOCS5. Interacts with SOCS5; inhibits IL4 signaling. Interacts with JAK3. Interacts with CLM1. Interacts with IL13RA2. Post-translationally, on IL4 binding, phosphorylated on C-terminal tyrosine residues. As to expression, isoform 2 is expressed in kidney, spleen, lung and liver.

The protein resides in the cell membrane. Its subcellular location is the secreted. Receptor for both interleukin 4 and interleukin 13. Couples to the JAK1/2/3-STAT6 pathway. The IL4 response is involved in promoting Th2 differentiation. The IL4/IL13 responses are involved in regulating IgE production and, chemokine and mucus production at sites of allergic inflammation. In certain cell types, can signal through activation of insulin receptor substrates, IRS1/IRS2. Functionally, isoform 2 (soluble form) inhibits IL4-induced spleen cell proliferation. The polypeptide is Interleukin-4 receptor subunit alpha (Il4r) (Rattus norvegicus (Rat)).